Consider the following 158-residue polypeptide: NAD(P)H-quinone oxidoreductase subunit J, chloroplastic (158 aa).

Belongs to the complex I 30 kDa subunit family. In terms of assembly, NDH is composed of at least 16 different subunits, 5 of which are encoded in the nucleus.

The protein resides in the plastid. Its subcellular location is the chloroplast thylakoid membrane. It carries out the reaction a plastoquinone + NADH + (n+1) H(+)(in) = a plastoquinol + NAD(+) + n H(+)(out). The catalysed reaction is a plastoquinone + NADPH + (n+1) H(+)(in) = a plastoquinol + NADP(+) + n H(+)(out). Its function is as follows. NDH shuttles electrons from NAD(P)H:plastoquinone, via FMN and iron-sulfur (Fe-S) centers, to quinones in the photosynthetic chain and possibly in a chloroplast respiratory chain. The immediate electron acceptor for the enzyme in this species is believed to be plastoquinone. Couples the redox reaction to proton translocation, and thus conserves the redox energy in a proton gradient. The chain is NAD(P)H-quinone oxidoreductase subunit J, chloroplastic from Spinacia oleracea (Spinach).